Reading from the N-terminus, the 99-residue chain is Leydig cell tumor 10 kDa protein homolog (99 aa).

The interval 1-37 is disordered; it reads MAQGQRKFQARKPAKSKTAATASEKNRGPRKGGRVIA. Basic residues predominate over residues 28 to 37; sequence GPRKGGRVIA.

The protein belongs to the UPF0390 family.

Its function is as follows. May have a potential role in hypercalcemia of malignancy. This chain is Leydig cell tumor 10 kDa protein homolog, found in Pongo abelii (Sumatran orangutan).